The sequence spans 51 residues: Large ribosomal subunit protein eL39 (51 aa).

The protein belongs to the eukaryotic ribosomal protein eL39 family. As to quaternary structure, interacts with YIH1.

This is Large ribosomal subunit protein eL39 (RPL39) from Kluyveromyces lactis (strain ATCC 8585 / CBS 2359 / DSM 70799 / NBRC 1267 / NRRL Y-1140 / WM37) (Yeast).